The chain runs to 475 residues: Protein translocase subunit SecD (475 aa).

6 consecutive transmembrane segments (helical) span residues 7-27, 313-333, 338-358, 364-384, 410-430, and 437-457; these read LLIT…SLKF, KGFM…FIYY, LIAD…MAYL, LPGV…NVLI, FWTI…LFQF, and GFAV…VTVT.

Belongs to the SecD/SecF family. SecD subfamily. As to quaternary structure, forms a complex with SecF. Part of the essential Sec protein translocation apparatus which comprises SecA, SecYEG and auxiliary proteins SecDF. Other proteins may also be involved.

Its subcellular location is the cell inner membrane. Its function is as follows. Part of the Sec protein translocase complex. Interacts with the SecYEG preprotein conducting channel. SecDF uses the proton motive force (PMF) to complete protein translocation after the ATP-dependent function of SecA. The chain is Protein translocase subunit SecD from Endomicrobium trichonymphae.